Reading from the N-terminus, the 305-residue chain is N-acetylmuramic acid 6-phosphate etherase (305 aa).

The interval 1-24 is disordered; that stretch reads MTTPPSSPLSDPRRTEGVHPTHTD. Positions 11-24 are enriched in basic and acidic residues; the sequence is DPRRTEGVHPTHTD. In terms of domain architecture, SIS spans 62 to 225; the sequence is ALPRLERGGR…SSALMVRLGK (164 aa). E90 acts as the Proton donor in catalysis. E121 is a catalytic residue.

Belongs to the GCKR-like family. MurNAc-6-P etherase subfamily. As to quaternary structure, homodimer.

The enzyme catalyses N-acetyl-D-muramate 6-phosphate + H2O = N-acetyl-D-glucosamine 6-phosphate + (R)-lactate. It participates in amino-sugar metabolism; N-acetylmuramate degradation. Its function is as follows. Specifically catalyzes the cleavage of the D-lactyl ether substituent of MurNAc 6-phosphate, producing GlcNAc 6-phosphate and D-lactate. This Deinococcus geothermalis (strain DSM 11300 / CIP 105573 / AG-3a) protein is N-acetylmuramic acid 6-phosphate etherase.